The sequence spans 325 residues: uncharacterized protein (325 aa).

This is an uncharacterized protein from Escherichia coli (Bacteriophage T4).